Here is a 215-residue protein sequence, read N- to C-terminus: AN1-type zinc finger protein C1271.05c (215 aa).

The span at I116–P128 shows a compositional bias: polar residues. Residues I116–A138 form a disordered region. The AN1-type zinc-finger motif lies at A144–K193. C150, C155, C166, C169, C174, H177, H183, and C185 together coordinate Zn(2+).

Its subcellular location is the cytoplasm. It is found in the nucleus. This chain is AN1-type zinc finger protein C1271.05c, found in Schizosaccharomyces pombe (strain 972 / ATCC 24843) (Fission yeast).